Consider the following 261-residue polypeptide: 3-hydroxyacyl-CoA dehydrogenase type-2 (261 aa).

Alanine 2 carries the N-acetylalanine modification. NAD(+) is bound by residues serine 20 and aspartate 41. At lysine 53 the chain carries N6-acetyllysine; alternate. The residue at position 53 (lysine 53) is an N6-succinyllysine; alternate. Valine 65 is an NAD(+) binding site. N6-acetyllysine is present on lysine 69. Cysteine 91 lines the NAD(+) pocket. Residues lysine 99 and lysine 105 each carry the N6-acetyllysine modification. At lysine 107 the chain carries N6-acetyllysine; alternate. Lysine 107 is subject to N6-succinyllysine; alternate. Position 155 (serine 155) interacts with substrate. Positions 168, 172, 201, and 203 each coordinate NAD(+). Tyrosine 168 (proton acceptor) is an active-site residue. Lysine 212 bears the N6-acetyllysine; alternate mark. The residue at position 212 (lysine 212) is an N6-succinyllysine; alternate.

Belongs to the short-chain dehydrogenases/reductases (SDR) family. In terms of assembly, homotetramer. Component of mitochondrial ribonuclease P, a complex composed of TRMT10C/MRPP1, HSD17B10/MRPP2 and PRORP/MRPP3. Interacts with TRMT10C/MRPP1; forming the MRPP1-MRPP2 subcomplex of the mitochondrial ribonuclease P complex.

It localises to the mitochondrion. Its subcellular location is the mitochondrion matrix. It is found in the mitochondrion nucleoid. It carries out the reaction a (3S)-3-hydroxyacyl-CoA + NAD(+) = a 3-oxoacyl-CoA + NADH + H(+). It catalyses the reaction (2S,3S)-3-hydroxy-2-methylbutanoyl-CoA + NAD(+) = 2-methyl-3-oxobutanoyl-CoA + NADH + H(+). The catalysed reaction is testosterone + NAD(+) = androst-4-ene-3,17-dione + NADH + H(+). The enzyme catalyses 5alpha-androstane-3alpha,17beta-diol + NAD(+) = 17beta-hydroxy-5alpha-androstan-3-one + NADH + H(+). It carries out the reaction 17beta-estradiol + NAD(+) = estrone + NADH + H(+). It catalyses the reaction cholate + NAD(+) = 3alpha,12alpha-dihydroxy-7-oxo-5beta-cholanate + NADH + H(+). The catalysed reaction is (3S)-3-hydroxybutanoyl-CoA + NAD(+) = acetoacetyl-CoA + NADH + H(+). The enzyme catalyses (3S)-hydroxyoctanoyl-CoA + NAD(+) = 3-oxooctanoyl-CoA + NADH + H(+). It carries out the reaction (3S)-hydroxyhexadecanoyl-CoA + NAD(+) = 3-oxohexadecanoyl-CoA + NADH + H(+). It catalyses the reaction 17beta-hydroxy-5alpha-androstan-3-one + NAD(+) = 5alpha-androstan-3,17-dione + NADH + H(+). The catalysed reaction is 5alpha-pregnan-20beta-ol-3-one + NAD(+) = 5alpha-pregnane-3,20-dione + NADH + H(+). The enzyme catalyses 3alpha-hydroxy-5alpha-pregnan-20-one + NAD(+) = 5alpha-pregnane-3,20-dione + NADH + H(+). It carries out the reaction cortisone + NAD(+) = 17alpha-hydroxypregn-4-en-3,11,20-trione-21-al + NADH + H(+). It catalyses the reaction 11-dehydrocorticosterone + NAD(+) = pregn-4-ene-3,11,20,21-tetraone + NADH + H(+). The catalysed reaction is cortisol + NAD(+) = 11beta,17alpha-dihydroxypregn-4-ene-3,20,21-trione + NADH + H(+). The enzyme catalyses chenodeoxycholate + NAD(+) = 7-oxolithocholate + NADH + H(+). It carries out the reaction ursodeoxycholate + NAD(+) = 7-oxolithocholate + NADH + H(+). It catalyses the reaction 3beta,7beta-dihydroxy-5beta-cholan-24-oate + NAD(+) = 3beta-hydroxy-7-oxo-5beta-cholan-24-oate + NADH + H(+). The protein operates within amino-acid degradation; L-isoleucine degradation. It participates in lipid metabolism; fatty acid beta-oxidation. It functions in the pathway steroid metabolism. Its pathway is lipid metabolism; bile acid biosynthesis. Mitochondrial dehydrogenase involved in pathways of fatty acid, branched-chain amino acid and steroid metabolism. Acts as (S)-3-hydroxyacyl-CoA dehydrogenase in mitochondrial fatty acid beta-oxidation, a major degradation pathway of fatty acids. Catalyzes the third step in the beta-oxidation cycle, namely the reversible conversion of (S)-3-hydroxyacyl-CoA to 3-ketoacyl-CoA. Preferentially accepts straight medium- and short-chain acyl-CoA substrates with highest efficiency for (3S)-hydroxybutanoyl-CoA. Acts as 3-hydroxy-2-methylbutyryl-CoA dehydrogenase in branched-chain amino acid catabolic pathway. Catalyzes the oxidation of 3-hydroxy-2-methylbutanoyl-CoA into 2-methyl-3-oxobutanoyl-CoA, a step in isoleucine degradation pathway. Has hydroxysteroid dehydrogenase activity toward steroid hormones and bile acids. Catalyzes the oxidation of 3alpha-, 17beta-, 20beta- and 21-hydroxysteroids and 7alpha- and 7beta-hydroxy bile acids. Oxidizes allopregnanolone/brexanolone at the 3alpha-hydroxyl group, which is known to be critical for the activation of gamma-aminobutyric acid receptors (GABAARs) chloride channel. Has phospholipase C-like activity toward cardiolipin and its oxidized species. Likely oxidizes the 2'-hydroxyl in the head group of cardiolipin to form a ketone intermediate that undergoes nucleophilic attack by water and fragments into diacylglycerol, dihydroxyacetone and orthophosphate. Has higher affinity for cardiolipin with oxidized fatty acids and may degrade these species during the oxidative stress response to protect cells from apoptosis. By interacting with intracellular amyloid-beta, it may contribute to the neuronal dysfunction associated with Alzheimer disease (AD). Essential for structural and functional integrity of mitochondria. In terms of biological role, in addition to mitochondrial dehydrogenase activity, moonlights as a component of mitochondrial ribonuclease P, a complex that cleaves tRNA molecules in their 5'-ends. Together with TRMT10C/MRPP1, forms a subcomplex of the mitochondrial ribonuclease P, named MRPP1-MRPP2 subcomplex, which displays functions that are independent of the ribonuclease P activity. The MRPP1-MRPP2 subcomplex catalyzes the formation of N(1)-methylguanine and N(1)-methyladenine at position 9 (m1G9 and m1A9, respectively) in tRNAs; HSD17B10/MRPP2 acting as a non-catalytic subunit. The MRPP1-MRPP2 subcomplex also acts as a tRNA maturation platform: following 5'-end cleavage by the mitochondrial ribonuclease P complex, the MRPP1-MRPP2 subcomplex enhances the efficiency of 3'-processing catalyzed by ELAC2, retains the tRNA product after ELAC2 processing and presents the nascent tRNA to the mitochondrial CCA tRNA nucleotidyltransferase TRNT1 enzyme. Associates with mitochondrial DNA complexes at the nucleoids to initiate RNA processing and ribosome assembly. The chain is 3-hydroxyacyl-CoA dehydrogenase type-2 (Hsd17b10) from Mus musculus (Mouse).